The following is a 461-amino-acid chain: Fumarate hydratase class II (461 aa).

Residues 97 to 99 (SGT), 127 to 130 (HPND), 137 to 139 (SSN), and Thr185 contribute to the substrate site. The active-site Proton donor/acceptor is the His186. Ser316 is an active-site residue. Residues Ser317 and 322–324 (KVN) each bind substrate.

It belongs to the class-II fumarase/aspartase family. Fumarase subfamily. Homotetramer.

It is found in the cytoplasm. The enzyme catalyses (S)-malate = fumarate + H2O. Its pathway is carbohydrate metabolism; tricarboxylic acid cycle; (S)-malate from fumarate: step 1/1. Its function is as follows. Involved in the TCA cycle. Catalyzes the stereospecific interconversion of fumarate to L-malate. This Staphylococcus aureus (strain MRSA252) protein is Fumarate hydratase class II.